Consider the following 527-residue polypeptide: Probable guanine deaminase (527 aa).

Residues histidine 79 and histidine 81 each contribute to the Zn(2+) site. Substrate-binding positions include 81–84 (HAPQ), 212–213 (RF), 239–242 (HISE), and aspartate 329. Histidine 239 and aspartate 329 together coordinate Zn(2+).

Belongs to the metallo-dependent hydrolases superfamily. ATZ/TRZ family. It depends on Zn(2+) as a cofactor.

It catalyses the reaction guanine + H2O + H(+) = xanthine + NH4(+). It participates in purine metabolism; guanine degradation; xanthine from guanine: step 1/1. Functionally, catalyzes the hydrolytic deamination of guanine, producing xanthine and ammonia. This is Probable guanine deaminase from Schizosaccharomyces pombe (strain 972 / ATCC 24843) (Fission yeast).